Consider the following 338-residue polypeptide: Ketol-acid reductoisomerase (NADP(+)) (338 aa).

The KARI N-terminal Rossmann domain maps to 1–181 (MKVFYDKDAD…GGGRAGIIET (181 aa)). NADP(+)-binding positions include 24–27 (YGSQ), Arg47, and Ser52. His107 is a catalytic residue. An NADP(+)-binding site is contributed by Gly133. The region spanning 182 to 327 (NFREETETDL…AKLRAMMPWI (146 aa)) is the KARI C-terminal knotted domain. 4 residues coordinate Mg(2+): Asp190, Glu194, Glu226, and Glu230. Ser251 is a binding site for substrate.

It belongs to the ketol-acid reductoisomerase family. Mg(2+) is required as a cofactor.

It carries out the reaction (2R)-2,3-dihydroxy-3-methylbutanoate + NADP(+) = (2S)-2-acetolactate + NADPH + H(+). It catalyses the reaction (2R,3R)-2,3-dihydroxy-3-methylpentanoate + NADP(+) = (S)-2-ethyl-2-hydroxy-3-oxobutanoate + NADPH + H(+). The protein operates within amino-acid biosynthesis; L-isoleucine biosynthesis; L-isoleucine from 2-oxobutanoate: step 2/4. It participates in amino-acid biosynthesis; L-valine biosynthesis; L-valine from pyruvate: step 2/4. Its function is as follows. Involved in the biosynthesis of branched-chain amino acids (BCAA). Catalyzes an alkyl-migration followed by a ketol-acid reduction of (S)-2-acetolactate (S2AL) to yield (R)-2,3-dihydroxy-isovalerate. In the isomerase reaction, S2AL is rearranged via a Mg-dependent methyl migration to produce 3-hydroxy-3-methyl-2-ketobutyrate (HMKB). In the reductase reaction, this 2-ketoacid undergoes a metal-dependent reduction by NADPH to yield (R)-2,3-dihydroxy-isovalerate. This chain is Ketol-acid reductoisomerase (NADP(+)), found in Polynucleobacter asymbioticus (strain DSM 18221 / CIP 109841 / QLW-P1DMWA-1) (Polynucleobacter necessarius subsp. asymbioticus).